We begin with the raw amino-acid sequence, 869 residues long: Facilitated trehalose transporter Tret1 (869 aa).

2 disordered regions span residues 1–214 and 258–315; these read MSGR…QKAT and KESS…LIHR. Residues 1-404 lie on the Cytoplasmic side of the membrane; the sequence is MSGRDNRGAG…VYRPTTNPIY (404 aa). The segment covering 25-43 has biased composition (basic and acidic residues); that stretch reads KLKEKLTRAGDDQGYHRVE. Low complexity-rich tracts occupy residues 44 to 57, 79 to 92, and 118 to 127; these read SNLS…SLDT, PQQQ…QQLR, and PFQQQQQRTP. Composition is skewed to basic and acidic residues over residues 147–156 and 258–291; these read EIREHRDRQQ and KESS…KLDK. Phosphoserine occurs at positions 260, 261, 262, 332, and 334. Residues 336–368 are disordered; that stretch reads EDFHTSRQHFQQQRSISTDSRKSRRPYEMDEMG. A compositionally biased stretch (polar residues) spans 343-353; that stretch reads QHFQQQRSIST. Residues 354 to 368 are compositionally biased toward basic and acidic residues; it reads DSRKSRRPYEMDEMG. The chain crosses the membrane as a helical span at residues 405 to 425; that stretch reads IWTQVLAALSVSLGSLVVGFV. Residues 426 to 452 are Extracellular-facing; sequence SAYTSPALVSMTNRNMTSFEVTPQAAS. Asparagine 440 is a glycosylation site (N-linked (GlcNAc...) asparagine). A helical membrane pass occupies residues 453–473; it reads WVGGIMPLAGLAGGIAGGPFI. At 474–485 the chain is on the cytoplasmic side; sequence EYLGRRNTILAT. Residues 486–506 traverse the membrane as a helical segment; sequence AIPFIVSSLLIACAVNVAMVL. Residues 507-509 are Extracellular-facing; that stretch reads AGR. Residues 510 to 530 form a helical membrane-spanning segment; sequence FLAGFCVGIASLSLPVYLGET. The Cytoplasmic segment spans residues 531-536; the sequence is VQPEVR. A helical transmembrane segment spans residues 537–557; it reads GTLGLLPTAFGNIGILLCFVA. Over 558–564 the chain is Extracellular; sequence GTYMDWS. A helical membrane pass occupies residues 565–585; it reads MLAFLGAALPVPFLILMFLIP. At 586–654 the chain is on the cytoplasmic side; it reads ETPRWFVSRG…NLKPLSISLG (69 aa). A helical membrane pass occupies residues 655 to 675; that stretch reads LMFFQQLSGINAVIFYTVSIF. Residues 676-685 are Extracellular-facing; sequence KDAGSTIDGN. A helical transmembrane segment spans residues 686–706; it reads LCTIIVGIVNFMATFIATLLI. Topologically, residues 707–712 are cytoplasmic; that stretch reads DRAGRK. A helical transmembrane segment spans residues 713–733; it reads ILLYVSNIAMIITLFVLGGFF. Over 734–752 the chain is Extracellular; sequence YCKSHGQDVSQLGWLPLSC. A helical transmembrane segment spans residues 753–773; the sequence is FVIYILGFSLGFGPIPWLMMG. Topologically, residues 774-779 are cytoplasmic; that stretch reads EILPSK. Residues 780-800 traverse the membrane as a helical segment; the sequence is IRGSAASVATAFNWSCTFVVT. The Extracellular portion of the chain corresponds to 801 to 813; sequence KTFQDMIDFMGAH. Residues 814–834 traverse the membrane as a helical segment; it reads GAFWLFGSICFIGLFFVILYV. Topologically, residues 835-869 are cytoplasmic; sequence PETQGKTLEDIERKMMGRVRRMSSVANMKPLAFNM. 2 positions are modified to phosphoserine: serine 857 and serine 858.

This sequence belongs to the major facilitator superfamily. Sugar transporter (TC 2.A.1.1) family. Trehalose transporter subfamily.

It is found in the cell membrane. In terms of biological role, low-capacity facilitative transporter for trehalose. Does not transport maltose, sucrose or lactose. Mediates the bidirectional transfer of trehalose. Responsible for the transport of trehalose synthesized in the fat body and the incorporation of trehalose into other tissues that require a carbon source, thereby regulating trehalose levels in the hemolymph. The protein is Facilitated trehalose transporter Tret1 of Drosophila persimilis (Fruit fly).